Here is a 1116-residue protein sequence, read N- to C-terminus: uncharacterized protein (1116 aa).

A helical transmembrane segment spans residues 3-20 (FFLTFLLFLFTLFSLFVY).

It is found in the membrane. This is an uncharacterized protein from Aquifex aeolicus (strain VF5).